The following is a 488-amino-acid chain: Protein Notchless (488 aa).

A disordered region spans residues 1–22 (MLAKKQKMQETDTEQEATPHTI). Residues 19–101 (PHTIQARLVS…VIDIVYQPQA (83 aa)) form a ubiquitin-like (UBL) domain region. 8 WD repeats span residues 117 to 156 (GHAE…PHFT), 159 to 198 (GHKQ…QKGR), 202 to 246 (GHKK…CLMN), 249 to 287 (GHTN…LCRT), 329 to 370 (LQES…CVER), 373 to 412 (GHQN…YMAT), 415 to 454 (GHVQ…LAQE), and 457 to 488 (GHAD…LWAY).

It belongs to the NLE1/RSA4 family. Interacts with Notch (via cytoplasmic domain). Associates with the pre-60S ribosomal particle.

It is found in the nucleus. Its subcellular location is the nucleolus. Its function is as follows. Plays a role in regulating Notch activity. In Drosophila melanogaster (Fruit fly), this protein is Protein Notchless.